We begin with the raw amino-acid sequence, 46 residues long: Mu-segestritoxin-Sf1h (46 aa).

4 disulfide bridges follow: Cys-3–Cys-19, Cys-10–Cys-22, Cys-18–Cys-42, and Cys-24–Cys-40. The keys region for toxin activity stretch occupies residues 31–33; it reads RPW.

Belongs to the neurotoxin 16 (SFI) family. As to expression, expressed by the venom gland.

Its subcellular location is the secreted. In terms of biological role, insecticidal toxin. It inhibits insect voltage-gated sodium channels (Nav) by partially blocking the channel pore in DUM neurons from the American cockroach, not by acting as a gating modifier. The inhibition is only partially reversible after prolonged washout. In vivo, the toxin causes flaccid paralysis followed by death when injected into Heliothis virescens larvae. It also causes uncoordinated movements followed by full paralysis to sheep blowflies (Lucilia cuprina). When the toxin is fused to snowdrop lectin, it is orally active against larvae of the tomato moth (Laconobia oleracea), the rice brown planthopper (Nilaparvata lugens), and the peach-potato aphid (Myzus persicae). This chain is Mu-segestritoxin-Sf1h, found in Segestria florentina (Tube-web spider).